The primary structure comprises 366 residues: Chorismate synthase (366 aa).

Positions 48 and 54 each coordinate NADP(+). Residues Arg-129–Ser-131, Asn-241–Ala-242, Gly-290, Lys-305–Ser-309, and Arg-331 each bind FMN.

Belongs to the chorismate synthase family. As to quaternary structure, homotetramer. The cofactor is FMNH2.

It catalyses the reaction 5-O-(1-carboxyvinyl)-3-phosphoshikimate = chorismate + phosphate. The protein operates within metabolic intermediate biosynthesis; chorismate biosynthesis; chorismate from D-erythrose 4-phosphate and phosphoenolpyruvate: step 7/7. Its function is as follows. Catalyzes the anti-1,4-elimination of the C-3 phosphate and the C-6 proR hydrogen from 5-enolpyruvylshikimate-3-phosphate (EPSP) to yield chorismate, which is the branch point compound that serves as the starting substrate for the three terminal pathways of aromatic amino acid biosynthesis. This reaction introduces a second double bond into the aromatic ring system. The polypeptide is Chorismate synthase (Nitrobacter hamburgensis (strain DSM 10229 / NCIMB 13809 / X14)).